Consider the following 314-residue polypeptide: Glycerol-3-phosphate dehydrogenase [NAD(P)+] (314 aa).

Residues Phe-11, Arg-30, and Lys-96 each coordinate NADPH. 3 residues coordinate sn-glycerol 3-phosphate: Lys-96, Gly-124, and Ser-126. An NADPH-binding site is contributed by Ala-128. 5 residues coordinate sn-glycerol 3-phosphate: Lys-179, Asp-232, Ser-242, Arg-243, and Asn-244. Lys-179 acts as the Proton acceptor in catalysis. Arg-243 contributes to the NADPH binding site. Residue Glu-264 coordinates NADPH.

It belongs to the NAD-dependent glycerol-3-phosphate dehydrogenase family.

The protein resides in the cytoplasm. It catalyses the reaction sn-glycerol 3-phosphate + NAD(+) = dihydroxyacetone phosphate + NADH + H(+). The catalysed reaction is sn-glycerol 3-phosphate + NADP(+) = dihydroxyacetone phosphate + NADPH + H(+). The protein operates within membrane lipid metabolism; glycerophospholipid metabolism. Catalyzes the reduction of the glycolytic intermediate dihydroxyacetone phosphate (DHAP) to sn-glycerol 3-phosphate (G3P), the key precursor for phospholipid synthesis. The chain is Glycerol-3-phosphate dehydrogenase [NAD(P)+] from Paracoccus denitrificans (strain Pd 1222).